The chain runs to 209 residues: Uracil phosphoribosyltransferase (209 aa).

Residues R79, R104, and 131-139 (DPMLATGGS) each bind 5-phospho-alpha-D-ribose 1-diphosphate. Uracil is bound by residues I194 and 199–201 (GDA). D200 is a binding site for 5-phospho-alpha-D-ribose 1-diphosphate.

Belongs to the UPRTase family. It depends on Mg(2+) as a cofactor.

It catalyses the reaction UMP + diphosphate = 5-phospho-alpha-D-ribose 1-diphosphate + uracil. It participates in pyrimidine metabolism; UMP biosynthesis via salvage pathway; UMP from uracil: step 1/1. With respect to regulation, allosterically activated by GTP. Functionally, catalyzes the conversion of uracil and 5-phospho-alpha-D-ribose 1-diphosphate (PRPP) to UMP and diphosphate. This Streptococcus pneumoniae (strain ATCC BAA-255 / R6) protein is Uracil phosphoribosyltransferase.